The sequence spans 341 residues: tRNA N6-adenosine threonylcarbamoyltransferase (341 aa).

Positions 111 and 115 each coordinate Fe cation. Substrate is bound by residues 134 to 138 (LVSGG), aspartate 167, glycine 180, and asparagine 276. Residue aspartate 304 coordinates Fe cation.

This sequence belongs to the KAE1 / TsaD family. It depends on Fe(2+) as a cofactor.

The protein resides in the cytoplasm. It carries out the reaction L-threonylcarbamoyladenylate + adenosine(37) in tRNA = N(6)-L-threonylcarbamoyladenosine(37) in tRNA + AMP + H(+). Functionally, required for the formation of a threonylcarbamoyl group on adenosine at position 37 (t(6)A37) in tRNAs that read codons beginning with adenine. Is involved in the transfer of the threonylcarbamoyl moiety of threonylcarbamoyl-AMP (TC-AMP) to the N6 group of A37, together with TsaE and TsaB. TsaD likely plays a direct catalytic role in this reaction. The sequence is that of tRNA N6-adenosine threonylcarbamoyltransferase from Alteromonas mediterranea (strain DSM 17117 / CIP 110805 / LMG 28347 / Deep ecotype).